The primary structure comprises 72 residues: Translation initiation factor IF-1 (72 aa).

Residues 1-72 enclose the S1-like domain; sequence MAKEESIKMN…SKGRITYRAR (72 aa).

Belongs to the IF-1 family. As to quaternary structure, component of the 30S ribosomal translation pre-initiation complex which assembles on the 30S ribosome in the order IF-2 and IF-3, IF-1 and N-formylmethionyl-tRNA(fMet); mRNA recruitment can occur at any time during PIC assembly.

The protein resides in the cytoplasm. Its function is as follows. One of the essential components for the initiation of protein synthesis. Stabilizes the binding of IF-2 and IF-3 on the 30S subunit to which N-formylmethionyl-tRNA(fMet) subsequently binds. Helps modulate mRNA selection, yielding the 30S pre-initiation complex (PIC). Upon addition of the 50S ribosomal subunit IF-1, IF-2 and IF-3 are released leaving the mature 70S translation initiation complex. The protein is Translation initiation factor IF-1 of Alkalilimnicola ehrlichii (strain ATCC BAA-1101 / DSM 17681 / MLHE-1).